Consider the following 38-residue polypeptide: Potassium channel toxin alpha-KTx 2.15 (38 aa).

Cystine bridges form between cysteine 7/cysteine 29, cysteine 13/cysteine 34, and cysteine 17/cysteine 36.

The protein belongs to the short scorpion toxin superfamily. Potassium channel inhibitor family. Alpha-KTx 02 subfamily. In terms of tissue distribution, expressed by the venom gland.

Its subcellular location is the secreted. Functionally, blocks human voltage-gated potassium channels Kv1.2/KCNA2 (IC(50)=0.3 nM), Kv1.3/KCNA3 (IC(50)=8.3 nM) and Shaker IR (with inactivation domain removed) (IC(50)=12 nM) and blocks intermediate conductance calcium-activated potassium channel KCa3.1/KCNN4 (IC(50)=6.4 nM). The sequence is that of Potassium channel toxin alpha-KTx 2.15 from Centruroides tecomanus (Scorpion).